Here is a 294-residue protein sequence, read N- to C-terminus: Epimerase family protein SDR39U1 (294 aa).

Residues 31 to 32 (SR), 58 to 59 (LA), E77, R82, and V160 contribute to the NADP(+) site.

The protein belongs to the NAD(P)-dependent epimerase/dehydratase family. SDR39U1 subfamily.

Its function is as follows. Putative NADP-dependent oxidoreductase. The polypeptide is Epimerase family protein SDR39U1 (SDR39U1) (Bos taurus (Bovine)).